The sequence spans 476 residues: RNA-binding protein 45 (476 aa).

The tract at residues 1 to 20 is disordered; the sequence is MDEAGSSASGGGFRPGVDSL. RRM domains follow at residues 26 to 106 and 121 to 195; these read SRIF…IAQS and TRIF…PKNK. A Glycyl lysine isopeptide (Lys-Gly) (interchain with G-Cter in SUMO2) cross-link involves residue Lys-34. Residues Ser-199 and Ser-464 each carry the phosphoserine modification. The 73-residue stretch at 392–464 folds into the RRM 3 domain; it reads ERLFIVFNPH…VRLKVMLADS (73 aa).

The protein localises to the cytoplasm. The protein resides in the nucleus. RNA-binding protein with binding specificity for poly(C). May play an important role in neural development. The chain is RNA-binding protein 45 (RBM45) from Homo sapiens (Human).